The primary structure comprises 126 residues: Large ribosomal subunit protein bL12 (126 aa).

It belongs to the bacterial ribosomal protein bL12 family. As to quaternary structure, homodimer. Part of the ribosomal stalk of the 50S ribosomal subunit. Forms a multimeric L10(L12)X complex, where L10 forms an elongated spine to which 2 to 4 L12 dimers bind in a sequential fashion. Binds GTP-bound translation factors.

In terms of biological role, forms part of the ribosomal stalk which helps the ribosome interact with GTP-bound translation factors. Is thus essential for accurate translation. The chain is Large ribosomal subunit protein bL12 from Prosthecochloris aestuarii (strain DSM 271 / SK 413).